We begin with the raw amino-acid sequence, 128 residues long: Large ribosomal subunit protein bL20c (128 aa).

This sequence belongs to the bacterial ribosomal protein bL20 family.

Its subcellular location is the plastid. Functionally, binds directly to 23S ribosomal RNA and is necessary for the in vitro assembly process of the 50S ribosomal subunit. It is not involved in the protein synthesizing functions of that subunit. The sequence is that of Large ribosomal subunit protein bL20c (rpl20) from Epifagus virginiana (Beechdrops).